Here is a 252-residue protein sequence, read N- to C-terminus: UPF0246 protein Fjoh_4905 (252 aa).

This sequence belongs to the UPF0246 family.

The sequence is that of UPF0246 protein Fjoh_4905 from Flavobacterium johnsoniae (strain ATCC 17061 / DSM 2064 / JCM 8514 / BCRC 14874 / CCUG 350202 / NBRC 14942 / NCIMB 11054 / UW101) (Cytophaga johnsonae).